A 137-amino-acid polypeptide reads, in one-letter code: Large ribosomal subunit protein eL28 (137 aa).

N-acetylserine is present on Ser-2. Residues Lys-58 and Lys-65 each participate in a glycyl lysine isopeptide (Lys-Gly) (interchain with G-Cter in SUMO2) cross-link. Ser-115 carries the phosphoserine modification.

It belongs to the eukaryotic ribosomal protein eL28 family. As to quaternary structure, component of the large ribosomal subunit.

The protein resides in the cytoplasm. Functionally, component of the large ribosomal subunit. The ribosome is a large ribonucleoprotein complex responsible for the synthesis of proteins in the cell. This Mus musculus (Mouse) protein is Large ribosomal subunit protein eL28 (Rpl28).